Consider the following 103-residue polypeptide: uncharacterized protein (103 aa).

The chain crosses the membrane as a helical span at residues 33 to 57; sequence GYVAAIVAGPVSMSPLDWICPLLAI.

It is found in the membrane. This is an uncharacterized protein from Sinorhizobium fredii (strain NBRC 101917 / NGR234).